Here is a 249-residue protein sequence, read N- to C-terminus: Small ribosomal subunit protein eS6 (249 aa).

Over residues 216–229 the composition is skewed to basic and acidic residues; sequence RMKEAKEKRQEQIA. A disordered region spans residues 216–249; it reads RMKEAKEKRQEQIAKRRRLSSLRASTSKSESSQK. S235, S236, S240, S244, and S247 each carry phosphoserine. Over residues 236 to 249 the composition is skewed to low complexity; that stretch reads SLRASTSKSESSQK.

It belongs to the eukaryotic ribosomal protein eS6 family. Component of the small ribosomal subunit. Part of the small subunit (SSU) processome, composed of more than 70 proteins and the RNA chaperone small nucleolar RNA (snoRNA) U3. Post-translationally, ribosomal protein S6 is the major substrate of protein kinases in eukaryote ribosomes. The phosphorylation is stimulated by growth factors, tumor promoting agents, and mitogens. It is dephosphorylated at growth arrest.

It is found in the cytoplasm. The protein resides in the nucleus. It localises to the nucleolus. Functionally, component of the 40S small ribosomal subunit. Plays an important role in controlling cell growth and proliferation through the selective translation of particular classes of mRNA. Part of the small subunit (SSU) processome, first precursor of the small eukaryotic ribosomal subunit. During the assembly of the SSU processome in the nucleolus, many ribosome biogenesis factors, an RNA chaperone and ribosomal proteins associate with the nascent pre-rRNA and work in concert to generate RNA folding, modifications, rearrangements and cleavage as well as targeted degradation of pre-ribosomal RNA by the RNA exosome. In Gallus gallus (Chicken), this protein is Small ribosomal subunit protein eS6 (RPS6).